A 447-amino-acid polypeptide reads, in one-letter code: uncharacterized protein (447 aa).

The protein resides in the mitochondrion. This is an uncharacterized protein from Dictyostelium discoideum (Social amoeba).